Reading from the N-terminus, the 406-residue chain is Phosphatidylserine decarboxylase proenzyme, mitochondrial (406 aa).

Residues 1 to 49 (MAVAGGRGCVRSLREGVLWRSSPCHCDYTATRHFLGALQKLPLQAWVRK) constitute a mitochondrion transit peptide. Over 50–60 (VHTAPLRTLFL) the chain is Mitochondrial matrix. A helical membrane pass occupies residues 61–79 (LRPVPILLAAGGGYAGYRQ). Topologically, residues 80–406 (YEKYRERQLE…ILFGEALGSL (327 aa)) are mitochondrial intermembrane. Active-site charge relay system; for autoendoproteolytic cleavage activity residues include D188, H264, and S375. S375 (schiff-base intermediate with substrate; via pyruvic acid; for decarboxylase activity) is an active-site residue. S375 carries the pyruvic acid (Ser); by autocatalysis modification.

Belongs to the phosphatidylserine decarboxylase family. PSD-B subfamily. Eukaryotic type I sub-subfamily. In terms of assembly, heterodimer of a large membrane-associated beta subunit and a small pyruvoyl-containing alpha subunit. Pyruvate is required as a cofactor. In terms of processing, is synthesized initially as an inactive proenzyme. Formation of the active enzyme involves a self-maturation process in which the active site pyruvoyl group is generated from an internal serine residue via an autocatalytic post-translational modification. Two non-identical subunits are generated from the proenzyme in this reaction, and the pyruvate is formed at the N-terminus of the alpha chain, which is derived from the carboxyl end of the proenzyme. The autoendoproteolytic cleavage occurs by a canonical serine protease mechanism, in which the side chain hydroxyl group of the serine supplies its oxygen atom to form the C-terminus of the beta chain, while the remainder of the serine residue undergoes an oxidative deamination to produce ammonia and the pyruvoyl prosthetic group on the alpha chain. During this reaction, the Ser that is part of the protease active site of the proenzyme becomes the pyruvoyl prosthetic group, which constitutes an essential element of the active site of the mature decarboxylase.

The protein localises to the mitochondrion inner membrane. It is found in the cytoplasm. It localises to the lipid droplet. The enzyme catalyses a 1,2-diacyl-sn-glycero-3-phospho-L-serine + H(+) = a 1,2-diacyl-sn-glycero-3-phosphoethanolamine + CO2. It functions in the pathway phospholipid metabolism; phosphatidylethanolamine biosynthesis. With respect to regulation, inhibited by hydroxylamine. Catalyzes the formation of phosphatidylethanolamine (PtdEtn) from phosphatidylserine (PtdSer). Plays a central role in phospholipid metabolism and in the interorganelle trafficking of phosphatidylserine. May be involved in lipid droplet biogenesis at the endoplasmic reticulum membrane. This is Phosphatidylserine decarboxylase proenzyme, mitochondrial from Rattus norvegicus (Rat).